Here is a 678-residue protein sequence, read N- to C-terminus: Protein hook (678 aa).

The tract at residues 1–155 is interaction with microtubules; it reads MSTQNGMYYS…NIMRALQELE (155 aa). In terms of domain architecture, Calponin-homology (CH) spans 5-123; it reads NGMYYSLLEW…RLLQLVLGCA (119 aa). 2 coiled-coil regions span residues 135–435 and 479–589; these read EIMC…LKCG and QTAL…AKEV.

Belongs to the hook family. Homodimer. Interacts with microtubules via its N-terminus.

It is found in the cytoplasm. The protein resides in the cytoskeleton. Its subcellular location is the endosome. It localises to the synapse. Functionally, involved in endocytic trafficking by stabilizing organelles of the endocytic pathway. Probably acts as a cytoskeletal linker protein required to tether endosome vesicles to the cytoskeleton. Involved in modulation of endocytosis at stages required for down-regulation of membrane proteins that control synapse size. Not involved in synaptic vesicle recycling. Required in R7 cells for boss endocytosis into multivesicular bodies (MVBs). Has a role in regulating adult longevity. This is Protein hook from Drosophila virilis (Fruit fly).